Consider the following 255-residue polypeptide: Ribonuclease HII (255 aa).

An RNase H type-2 domain is found at 72–255 (AIICGIDEVG…KSFEPIKSLL (184 aa)). The a divalent metal cation site is built by Asp-78, Glu-79, and Asp-170.

The protein belongs to the RNase HII family. Mn(2+) serves as cofactor. Requires Mg(2+) as cofactor.

It localises to the cytoplasm. The enzyme catalyses Endonucleolytic cleavage to 5'-phosphomonoester.. In terms of biological role, endonuclease that specifically degrades the RNA of RNA-DNA hybrids. This chain is Ribonuclease HII, found in Staphylococcus aureus (strain Mu3 / ATCC 700698).